Reading from the N-terminus, the 629-residue chain is Probable indole-3-acetic acid-amido synthetase GH3.4 (629 aa).

The protein belongs to the IAA-amido conjugating enzyme family. In terms of tissue distribution, expressed in flowers.

Functionally, may catalyze the synthesis of indole-3-acetic acid (IAA)-amino acid conjugates, providing a mechanism for the plant to cope with the presence of excess auxin. This is Probable indole-3-acetic acid-amido synthetase GH3.4 (GH3.4) from Oryza sativa subsp. japonica (Rice).